Consider the following 467-residue polypeptide: DNA repair protein RadA (467 aa).

The segment at Cys10–Cys27 adopts a C4-type zinc-finger fold. Gly98–Ser105 contacts ATP. The RadA KNRFG motif signature appears at Lys260 to Gly264. The segment at Asp359–Lys467 is lon-protease-like.

Belongs to the RecA family. RadA subfamily.

DNA-dependent ATPase involved in processing of recombination intermediates, plays a role in repairing DNA breaks. Stimulates the branch migration of RecA-mediated strand transfer reactions, allowing the 3' invading strand to extend heteroduplex DNA faster. Binds ssDNA in the presence of ADP but not other nucleotides, has ATPase activity that is stimulated by ssDNA and various branched DNA structures, but inhibited by SSB. Does not have RecA's homology-searching function. This chain is DNA repair protein RadA, found in Brucella abortus (strain 2308).